A 141-amino-acid polypeptide reads, in one-letter code: Hemoglobin subunit alpha (141 aa).

Residues 1-141 (VLSAADKSNV…VSTVLTSKYR (141 aa)) enclose the Globin domain. Ser3 carries the post-translational modification Phosphoserine. N6-succinyllysine occurs at positions 7 and 11. Position 16 is an N6-acetyllysine; alternate (Lys16). Residue Lys16 is modified to N6-succinyllysine; alternate. The residue at position 24 (Tyr24) is a Phosphotyrosine. The residue at position 35 (Ser35) is a Phosphoserine. Lys40 is subject to N6-succinyllysine. A Phosphoserine modification is found at Ser49. His58 is an O2 binding site. His87 contacts heme b. Phosphoserine is present on Ser102. Thr108 carries the post-translational modification Phosphothreonine. The residue at position 124 (Ser124) is a Phosphoserine. A phosphothreonine mark is found at Thr134 and Thr137. At Ser138 the chain carries Phosphoserine.

The protein belongs to the globin family. As to quaternary structure, heterotetramer of two alpha chains and two beta chains. As to expression, red blood cells.

Its function is as follows. Involved in oxygen transport from the lung to the various peripheral tissues. Hemopressin acts as an antagonist peptide of the cannabinoid receptor CNR1. Hemopressin-binding efficiently blocks cannabinoid receptor CNR1 and subsequent signaling. This chain is Hemoglobin subunit alpha (HBA), found in Felis catus (Cat).